A 172-amino-acid chain; its full sequence is Large ribosomal subunit protein uL10 (172 aa).

Belongs to the universal ribosomal protein uL10 family. Part of the ribosomal stalk of the 50S ribosomal subunit. The N-terminus interacts with L11 and the large rRNA to form the base of the stalk. The C-terminus forms an elongated spine to which L12 dimers bind in a sequential fashion forming a multimeric L10(L12)X complex.

Functionally, forms part of the ribosomal stalk, playing a central role in the interaction of the ribosome with GTP-bound translation factors. The sequence is that of Large ribosomal subunit protein uL10 from Rhizobium leguminosarum bv. trifolii (strain WSM2304).